The chain runs to 154 residues: MKAQKGFTLIELMIVVAIIGILAAIAIPQYQDYTARTQVTRAVSEVSALKTAAESAILEGKEIVSSATPKDTQYDIGFTESTLLDGSGKSQIQVTDNQDGTVELVATLGKSSGSAIKGAVITVSRKNDGVWNCKITKTPTAWKPNYAPANCPKS.

The propeptide at 1–6 (MKAQKG) is leader sequence. Phe7 is subject to N-methylphenylalanine. Residues 7–27 (FTLIELMIVVAIIGILAAIAI) traverse the membrane as a helical segment. A disulfide bridge links Cys133 with Cys151. Ser154 carries O-linked (FucNAc...) serine glycosylation.

This sequence belongs to the N-Me-Phe pilin family. In terms of assembly, the pili are polar flexible filaments of about 5.4 nanometers diameter and 2.5 micrometers average length; they consist of only a single polypeptide chain arranged in a helical configuration of five subunits per turn in the assembled pilus. O-glycosylated; glycan consists of 5NbetaOHC47NFmPse(alpha2-4)Xyl(beta1-3)FucNAc in beta1-O linkage to Ser.

It is found in the fimbrium. The protein resides in the membrane. The chain is Fimbrial protein (pilA) from Pseudomonas aeruginosa.